Here is a 284-residue protein sequence, read N- to C-terminus: BTB/POZ domain-containing protein 2 (284 aa).

In terms of domain architecture, BTB spans Ser-37–Ala-108.

In terms of assembly, interacts with cul3.

The protein resides in the cytoplasm. The protein localises to the nucleus. The protein operates within protein modification; protein ubiquitination. Probable substrate-specific adapter of an E3 ubiquitin-protein ligase complex which mediates the ubiquitination and subsequent proteasomal degradation of target proteins. This chain is BTB/POZ domain-containing protein 2 (btb2), found in Schizosaccharomyces pombe (strain 972 / ATCC 24843) (Fission yeast).